Here is a 429-residue protein sequence, read N- to C-terminus: Cleavage stimulation factor subunit 50 (429 aa).

A hydrophobic region spans residues 20-41 (LNALIVAHLRHHNLSQVASAVA). WD repeat units follow at residues 121 to 160 (EHKSVVRCARFSPDGMFFATGGADTSIKLFEVPKVKQMIS), 174 to 213 (DHAEPINDLDFHPRSTILISSAKDNCIKFFDFSKTTAKRA), 218 to 257 (QDTHNVRSISFHPSGEFLLAGTDHPIPHLYDVNTYQCFLP), 264 to 303 (GVSGAINQVRYSSTGSIYITASKDGAIRLFDGVSAKCVRS), 308 to 347 (HGKSEVTSAVFTKDQRFVLSSGKDSTVKLWEIGSGRMVKE), 351 to 392 (AKRV…KVAK), and 396 to 429 (NHNGAPRWIEHSPVESVFVTCGIDRSIRFWKESV).

In terms of assembly, homodimer. Belongs to the CSTF complex. Forms a complex with cleavage and polyadenylation specificity factor (CPSF) subunits CSTF64, PABN3, CPSF30, FIPS5 and CPSF100.

Its subcellular location is the nucleus. One of the multiple factors required for polyadenylation and 3'-end cleavage of pre-mRNAs. May be responsible for the interaction of CSTF with other factors to form a stable complex on the pre-mRNA. The protein is Cleavage stimulation factor subunit 50 of Arabidopsis thaliana (Mouse-ear cress).